The sequence spans 125 residues: Small ribosomal subunit protein bS6 (125 aa).

The tract at residues 99 to 125 (ASPMVKAKDERRASAEVENNDFEDAEE) is disordered. Residues 104 to 113 (KAKDERRASA) are compositionally biased toward basic and acidic residues. The segment covering 116–125 (ENNDFEDAEE) has biased composition (acidic residues).

Belongs to the bacterial ribosomal protein bS6 family.

In terms of biological role, binds together with bS18 to 16S ribosomal RNA. This chain is Small ribosomal subunit protein bS6, found in Mannheimia succiniciproducens (strain KCTC 0769BP / MBEL55E).